Consider the following 547-residue polypeptide: uncharacterized protein (547 aa).

Residues 1-19 (MVRLNHAASYFMPIFCSTR) lie on the Cytoplasmic side of the membrane. A helical transmembrane segment spans residues 20–40 (PHIVILSALFSISLFSLFYAS). Over 41–64 (SELLLHQYDDPLMFKPNSQDYFRT) the chain is Vacuolar. A helical transmembrane segment spans residues 65–85 (FLLGLFSPFLYYFLKTFLFNI). Residues 86–89 (NQRF) are Cytoplasmic-facing. A helical membrane pass occupies residues 90–110 (LILNLIVDFPINDVFMLLILI). Residues 111–139 (GLAYPQVQDHEGGTIKHKECSWHIIPRQA) lie on the Vacuolar side of the membrane. A helical membrane pass occupies residues 140–160 (YIFGISWALGEFTICIIGNLF). At 161–340 (NYQEIADPNI…RFIAFSTAYQ (180 aa)) the chain is on the cytoplasmic side. At serine 225 the chain carries Phosphoserine. The disordered stretch occupies residues 237–271 (PIKPLRSSSSTYGSIRQQPHENKKQLHVPDNSQDD). The span at 242–253 (RSSSSTYGSIRQ) shows a compositional bias: polar residues. A helical transmembrane segment spans residues 341–361 (LVTGLLLMILVVGSNIMLTIG). Over 362-394 (ESLILSMYFVYVRGHEGLFTPVVNYFGSRTISN) the chain is Vacuolar. Residues 395–415 (FILCVIIPFISLNFLINTSIY) form a helical membrane-spanning segment. At 416-523 (LRRELDDWFN…NWRALARNDS (108 aa)) the chain is on the cytoplasmic side. A helical membrane pass occupies residues 524 to 544 (FVLGVMVSWSLLVFVTGILST). Residues 545 to 547 (VYI) are Vacuolar-facing.

Its subcellular location is the vacuole membrane. This is an uncharacterized protein from Saccharomyces cerevisiae (strain ATCC 204508 / S288c) (Baker's yeast).